A 181-amino-acid polypeptide reads, in one-letter code: Ribulose bisphosphate carboxylase small subunit, chloroplastic 2 (181 aa).

A chloroplast-targeting transit peptide spans 1 to 57 (MAFLIMSSAAAVATGTNAAQASMIAPFTGLKSATSFPVSRKQNLDITSIASNGGRVQ).

Belongs to the RuBisCO small chain family. Heterohexadecamer of 8 large and 8 small subunits.

Its subcellular location is the plastid. It is found in the chloroplast. Its function is as follows. RuBisCO catalyzes two reactions: the carboxylation of D-ribulose 1,5-bisphosphate, the primary event in carbon dioxide fixation, as well as the oxidative fragmentation of the pentose substrate. Both reactions occur simultaneously and in competition at the same active site. Although the small subunit is not catalytic it is essential for maximal activity. The protein is Ribulose bisphosphate carboxylase small subunit, chloroplastic 2 of Nicotiana sylvestris (Wood tobacco).